A 489-amino-acid polypeptide reads, in one-letter code: Bifunctional protein HldE (489 aa).

A ribokinase region spans residues 1–330 (MFDFDGLSNA…RKILPPAFLA (330 aa)). ATP is bound at residue 205-208 (NRKE). Residue aspartate 275 is part of the active site. The tract at residues 358 to 489 (FTNGCFDILH…SLVKRAGGRA (132 aa)) is cytidylyltransferase.

The protein in the N-terminal section; belongs to the carbohydrate kinase PfkB family. This sequence in the C-terminal section; belongs to the cytidylyltransferase family. Homodimer.

It carries out the reaction D-glycero-beta-D-manno-heptose 7-phosphate + ATP = D-glycero-beta-D-manno-heptose 1,7-bisphosphate + ADP + H(+). It catalyses the reaction D-glycero-beta-D-manno-heptose 1-phosphate + ATP + H(+) = ADP-D-glycero-beta-D-manno-heptose + diphosphate. The protein operates within nucleotide-sugar biosynthesis; ADP-L-glycero-beta-D-manno-heptose biosynthesis; ADP-L-glycero-beta-D-manno-heptose from D-glycero-beta-D-manno-heptose 7-phosphate: step 1/4. Its pathway is nucleotide-sugar biosynthesis; ADP-L-glycero-beta-D-manno-heptose biosynthesis; ADP-L-glycero-beta-D-manno-heptose from D-glycero-beta-D-manno-heptose 7-phosphate: step 3/4. Catalyzes the phosphorylation of D-glycero-D-manno-heptose 7-phosphate at the C-1 position to selectively form D-glycero-beta-D-manno-heptose-1,7-bisphosphate. In terms of biological role, catalyzes the ADP transfer from ATP to D-glycero-beta-D-manno-heptose 1-phosphate, yielding ADP-D-glycero-beta-D-manno-heptose. The polypeptide is Bifunctional protein HldE (Nitrobacter hamburgensis (strain DSM 10229 / NCIMB 13809 / X14)).